Reading from the N-terminus, the 150-residue chain is MSKTISFKTYSAKPGEVERKWYVVDAEGKVLGRLASEIATILRGKHKPQFTPHVDTGDFVIVTNAGKIGLSGKKLDQKTYFSHSNYPGGVKIENLKDMLRKKPEKVIEKAVWGMLPHNNLGRALFKKLKVYAGPEHPHVSQSPVEMKVNQ.

The protein belongs to the universal ribosomal protein uL13 family. As to quaternary structure, part of the 50S ribosomal subunit.

Its function is as follows. This protein is one of the early assembly proteins of the 50S ribosomal subunit, although it is not seen to bind rRNA by itself. It is important during the early stages of 50S assembly. The sequence is that of Large ribosomal subunit protein uL13 from Chlorobium phaeobacteroides (strain BS1).